Here is a 1030-residue protein sequence, read N- to C-terminus: Alpha-L-rhamnosidase (1030 aa).

A carbohydrate-binding module-67 (CBM67) region spans residues 133–297; sequence PSLEGSSWIW…GAGPWGRVAP (165 aa). 2 residues coordinate Ca(2+): Asp-179 and Asn-180. Residues 179–180 and Trp-203 each bind alpha-L-rhamnose; that span reads DN. Ca(2+) contacts are provided by Asn-228 and Pro-233. Alpha-L-rhamnose-binding positions include Asp-630, 634-636, Asp-643, and Trp-695; that span reads RDE. The active-site Proton donor is the Glu-636. Glu-895 (proton acceptor) is an active-site residue. Position 916 (His-916) interacts with alpha-L-rhamnose.

It belongs to the glycosyl hydrolase 78 family.

It carries out the reaction Hydrolysis of terminal non-reducing alpha-L-rhamnose residues in alpha-L-rhamnosides.. In terms of biological role, alpha-L-rhamnosidase which is able to degrade p-nitrophenyl-alpha-L-rhamnopyranoside (PNP-Rha) in vitro. Releases L-rhamnose from citrus flavonoids such as naringin, rutin and hesperidin, and the arabinogalactan-protein (AGP) gum arabic. AGPs are a family of proteoglycans that are localized on the cell surfaces of higher plants. Cleaves both the alpha-1,6 and the alpha-1,2-linked rhamnosyl residues. The polypeptide is Alpha-L-rhamnosidase (Streptomyces avermitilis (strain ATCC 31267 / DSM 46492 / JCM 5070 / NBRC 14893 / NCIMB 12804 / NRRL 8165 / MA-4680)).